Consider the following 253-residue polypeptide: 5'-nucleotidase SurE (253 aa).

4 residues coordinate a divalent metal cation: Asp8, Asp9, Ser39, and Asn95.

The protein belongs to the SurE nucleotidase family. A divalent metal cation is required as a cofactor.

It localises to the cytoplasm. The enzyme catalyses a ribonucleoside 5'-phosphate + H2O = a ribonucleoside + phosphate. In terms of biological role, nucleotidase that shows phosphatase activity on nucleoside 5'-monophosphates. The polypeptide is 5'-nucleotidase SurE (Desulfatibacillum aliphaticivorans).